Consider the following 282-residue polypeptide: Phenylethanolamine N-methyltransferase (282 aa).

Ser7 carries the post-translational modification Phosphoserine. S-adenosyl-L-methionine-binding positions include Tyr35, Tyr40, 79–80 (GS), Tyr85, Asp101, Asn106, 158–159 (DV), and Ala181. Residues Glu219 and Asp267 each coordinate octopamine.

It carries out the reaction phenylethanolamine + S-adenosyl-L-methionine = N-methylphenylethanolamine + S-adenosyl-L-homocysteine + H(+). The catalysed reaction is (R)-noradrenaline + S-adenosyl-L-methionine = (R)-adrenaline + S-adenosyl-L-homocysteine + H(+). The enzyme catalyses (R)-normetanephrine + S-adenosyl-L-methionine = (R)-metanephrine + S-adenosyl-L-homocysteine + H(+). It catalyses the reaction (R)-octopamine + S-adenosyl-L-methionine = (R)-synephrine + S-adenosyl-L-homocysteine + H(+). It functions in the pathway catecholamine biosynthesis; (R)-adrenaline biosynthesis; (R)-adrenaline from (R)-noradrenaline: step 1/1. With respect to regulation, inhibited by methyl methanethiosulfonate, phenylglyoxal, tetranitromethane and diethyl pyrocarbonate. Inhibited by 4-oxo-1,4-dihydro-quinoline-3,7-dicarboxylic acid, 4-(benzo[d][1,3]dioxol-5-ylamino)-4-oxobutanoic acid and 1,4-diaminonaphthalene-2,6-disulfonic acid. In terms of biological role, catalyzes the transmethylation of nonepinephrine (noradrenaline) to form epinephrine (adrenaline), using S-adenosyl-L-methionine as the methyl donor. Other substrates include phenylethanolamine and octopamine. Also methylates normetanephrine. The sequence is that of Phenylethanolamine N-methyltransferase (PNMT) from Homo sapiens (Human).